A 143-amino-acid polypeptide reads, in one-letter code: Hemoglobin subunit alpha-1 (143 aa).

Serine 2 is modified (N-acetylserine). A Globin domain is found at 2-143; that stretch reads SLTEKDKAAV…VSLALAERYR (142 aa). An O2-binding site is contributed by histidine 60. Histidine 89 lines the heme b pocket.

Belongs to the globin family. As to quaternary structure, hb 1 is a heterotetramer of two alpha-1 and two beta chains. In terms of tissue distribution, red blood cells.

Functionally, involved in oxygen transport from gills to the various peripheral tissues. The protein is Hemoglobin subunit alpha-1 (hba1) of Cottoperca gobio (Frogmouth).